Here is a 173-residue protein sequence, read N- to C-terminus: MNTDAIESMVRDVLSRMNSLQGDAPAAAPAAGGTSRSAKVSDYPLANKHPEWVKTATNKTLDDFTLENVLSNKVTAQDMRITPETLRLQASIAKDAGRDRLAMNFERAAELTAVPDDRILEIYNALRPYRSTKEELLAIADDLENRYQAKICAAFVREAAGLYVERKKLKGDD.

The protein belongs to the diol/glycerol dehydratase small subunit family. In terms of assembly, the propanediol dehydratase enzyme is a heterotrimeric complex composed of a large (PduC), a medium (PduD) and a small (PduE) subunit. The cofactor is adenosylcob(III)alamin.

It localises to the bacterial microcompartment. It carries out the reaction propane-1,2-diol = propanal + H2O. It functions in the pathway polyol metabolism; 1,2-propanediol degradation. Inhibited by glycerol. Part of the PduCDE complex that catalyzes the dehydration of 1,2-propanediol (1,2-PD) to propionaldehyde. Required for S.typhimurium growth on 1,2-PD as the sole carbon and energy source. Localized in the bacterial microcompartment (BMC) dedicated to 1,2-PD degradation. Functionally, the 1,2-PD-specific bacterial microcompartment (BMC) concentrates low levels of 1,2-PD catabolic enzymes, concentrates volatile reaction intermediates thus enhancing pathway flux and keeps the level of toxic, mutagenic propionaldehyde low. This is Propanediol dehydratase small subunit from Salmonella typhimurium (strain LT2 / SGSC1412 / ATCC 700720).